The sequence spans 621 residues: Chaperone protein HtpG (621 aa).

Residues M1–R341 form an a; substrate-binding region. The interval E342–N547 is b. The c stretch occupies residues L548 to L621.

The protein belongs to the heat shock protein 90 family. In terms of assembly, homodimer.

It localises to the cytoplasm. Functionally, molecular chaperone. Has ATPase activity. The chain is Chaperone protein HtpG from Helicobacter acinonychis (strain Sheeba).